Consider the following 1992-residue polypeptide: MSNRPNNNPGGSLRRSQRNTAGAQPQDDSIGGRSCSSSSVVIVPQPEDPDRANTSEKQKTGQVPKKDNSRGVKRSASPDYNRTNSPSSAKKPKALQHTESPSETSKPHSKSKKRHLDQEPQLKSAPSPSTSKAHTRKSGAAAGSRSQKRKRTESSCIKSASVSEATGAEERSAKPTKLASKSAASAKAGCSTITDSSSAASTSSSSSAVASASSAVPPGARVKQGKDQNKARRSRSASSPSPRRSSREKEQSKTGGSSKFDWAARFSPKVSLPKTKLSLPGSSKSETSKPGPSGLQAKLASLRKSTKKRSESPPAELPSLRRSTRQKTTGSCASASRRGSGLGKRGAAEARRQEKMADPEGNQETVNSSAARTDETPQGAAGAVGMTTSGESESDDSEMGRLQALLEARGLPPHLFGPLGPRMSQLFHRTIGSGASSKAQQLLQGLQASDESQQLQAVIEMCQLLVMGNEETLGGFPVKSVVPALITLLQMEHNFDIMNHACRALTYMMEALPRSSAVVVDAIPVFLEKLQVIQCIDVAEQALTALEMLSRRHSKAILQAGGLADCLLYLEFFSINAQRNALAIAANCCQSITPDEFHFVADSLPLLTQRLTHQDKKSVESTCLCFARLVDNFQHEENLLQQVASKDLLTNVQQLLVVTPPILSSGMFIMVVRMFSLMCSNCPTLAVQLMKQNIAETLHFLLCGASNGSCQEQIDLVPRSPQELYELTSLICELMPCLPKEGIFAVDTMLKKGNAQNTDGAIWQWRDDRGLWHPYNRIDSRIIEQINEDTGTARAIQRKPNPLANTNTSGYSELKKDDARAQLMKEDPELAKSFIKTLFGVLYEVYSSSAGPAVRHKCLRAILRIIYFADAELLKDVLKNHAVSSHIASMLSSQDLKIVVGALQMAEILMQKLPDIFSVYFRREGVMHQVKHLAESESLLTSPPKACTNGSGSLGSTPSVNSGTATAATNASADLGSPSLQHSRDDSLDLSPQGRLSDVLKRKRLPKRGSRRPKYSPPRDDDKVDNQAKSPTTTQSPKSSFLASLNPKTWGRLSAQSNSNNIEPARTAGVSGLARAASKDTISNNREKIKGWIKEQAHKFVERYFSSENMDGSNPALNVLQRLCAATEQLNLQVDGGAECLVEIRSIVSESDVSSFEIQHSGFVKQLLLYLTSKSEKDAVSREIRLKRFLHVFFSSPLPGEEPIERVEPVGNAPLLALVHKMNNCLSQMEQFPVKVHDFPSGNGTGGSFSLNRGSQALKFFNTHQLKCQLQRHPDCANVKQWKGGPVKIDPLALVQAIERYLVVRGYGRVREDDEDSDDDGSDEEIDESLAAQFLNSGNVRHRLQFYIGEHLLPYNMTVYQAVRQFSIQAEDERESTDDESNPLGRAGIWTKTHTIWYKPVREDEESNKDCVGGKRGRAQTAPTKTSPRNAKKHDELWNDGVCPSVSNPLEVYLIPTAPENITFEDPSLDVILLLRVLHAVSRYWYYLYDNAMCKEIIPTSEFINSKLTAKANRQLQDPLVIMTGNIPTWLTELGKTCPFFFPFDTRQMLFYVTAFDRDRAMQRLLDTNPEINQSDSQDSRVAPRLDRKKRTVNREELLKQAESVMQDLGSSRAMLEIQYENEVGTGLGPTLEFYALVSQELQRADLGLWRGEEVTLSNPKGSQEGTKYIQNLQGLFALPFGRTAKPAHIAKVKMKFRFLGKLMAKAIMDFRLVDLPLGLPFYKWMLRQETSLTSHDLFDIDPVVARSVYHLEDIVRQKKRLEQDKSQTKESLQYALETLTMNGCSVEDLGLDFTLPGFPNIELKKGGKDIPVTIHNLEEYLRLVIFWALNEGVSRQFDSFRDGFESVFPLSHLQYFYPEELDQLLCGSKADTWDAKTLMECCRPDHGYTHDSRAVKFLFEILSSFDNEQQRLFLQFVTGSPRLPVGGFRSLNPPLTIVRKTFESTENPDDFLPSVMTCVNYLKLPDYSSLEIMREKLLMAAREGQQSFHLS.

The span at 1–10 shows a compositional bias: polar residues; that stretch reads MSNRPNNNPG. The segment at 1–398 is disordered; the sequence is MSNRPNNNPG…SGESESDDSE (398 aa). Residue Ser2 is modified to N-acetylserine. Ser12 carries the post-translational modification Phosphoserine. Residues 18–27 are compositionally biased toward polar residues; that stretch reads RNTAGAQPQD. The segment covering 29–43 has biased composition (low complexity); that stretch reads SIGGRSCSSSSVVIV. Residues 48-70 show a composition bias toward basic and acidic residues; that stretch reads DPDRANTSEKQKTGQVPKKDNSR. A phosphoserine mark is found at Ser77, Ser85, and Ser100. The span at 78–88 shows a compositional bias: polar residues; sequence PDYNRTNSPSS. Polar residues predominate over residues 154–164; that stretch reads SSCIKSASVSE. Composition is skewed to low complexity over residues 175–188 and 196–215; these read PTKL…SAKA and SSSA…ASSA. An N6-acetyllysine modification is found at Lys181. Residues 280–290 are compositionally biased toward polar residues; sequence PGSSKSETSKP. Phosphoserine is present on residues Ser310 and Ser312. A compositionally biased stretch (low complexity) spans 330–339; sequence GSCASASRRG. Basic and acidic residues predominate over residues 346 to 358; it reads GAAEARRQEKMAD. Positions 362-371 are enriched in polar residues; that stretch reads NQETVNSSAA. Residues 749–836 enclose the WWE domain; sequence MLKKGNAQNT…DPELAKSFIK (88 aa). The interval 938-1044 is disordered; that stretch reads SLLTSPPKAC…QSPKSSFLAS (107 aa). Ser942 bears the Phosphoserine mark. The span at 948 to 960 shows a compositional bias: polar residues; sequence TNGSGSLGSTPSV. A compositionally biased stretch (low complexity) spans 961–973; it reads NSGTATAATNASA. A phosphoserine mark is found at Ser991 and Ser997. Residues 1001 to 1014 are compositionally biased toward basic residues; sequence KRKRLPKRGSRRPK. Position 1016 is a phosphoserine (Ser1016). The segment covering 1017–1026 has biased composition (basic and acidic residues); the sequence is PPRDDDKVDN. Over residues 1029-1040 the composition is skewed to low complexity; the sequence is KSPTTTQSPKSS. Phosphoserine is present on residues Ser1030, Ser1317, Ser1322, Ser1329, and Ser1376. Thr1377 carries the phosphothreonine modification. Disordered stretches follow at residues 1407–1434 and 1568–1587; these read SNKD…AKKH and TNPE…PRLD. Lys1425 bears the N6-acetyllysine mark. Ser1427 carries the post-translational modification Phosphoserine. The segment at 1496-1570 is K-box; sequence EIIPTSEFIN…AMQRLLDTNP (75 aa). The HECT domain maps to 1885–1992; it reads PDHGYTHDSR…REGQQSFHLS (108 aa). The Glycyl thioester intermediate role is filled by Cys1959.

This sequence belongs to the UPL family. K-HECT subfamily. In terms of assembly, interacts with MYC; leading to disrupt interaction with isoform p19ARF/ARF of CDKN2A. Interacts with TRADD; leading to disrupt interaction with isoform p19ARF/ARF of CDKN2A. Interacts with SMARCC1; leading to disrupt interaction with SMARCE1.

Its subcellular location is the nucleus. The protein resides in the nucleoplasm. The catalysed reaction is S-ubiquitinyl-[E2 ubiquitin-conjugating enzyme]-L-cysteine + [acceptor protein]-L-lysine = [E2 ubiquitin-conjugating enzyme]-L-cysteine + N(6)-ubiquitinyl-[acceptor protein]-L-lysine.. It functions in the pathway protein modification; protein ubiquitination. In terms of biological role, E3 ubiquitin-protein ligase involved in ubiquitin fusion degradation (UFD) pathway and regulation of DNA repair. Part of the ubiquitin fusion degradation (UFD) pathway, a process that mediates ubiquitination of protein at their N-terminus, regardless of the presence of lysine residues in target proteins. Acts as a key regulator of DNA damage response by acting as a suppressor of RNF168, an E3 ubiquitin-protein ligase that promotes accumulation of 'Lys-63'-linked histone H2A and H2AX at DNA damage sites, thereby acting as a guard against excessive spreading of ubiquitinated chromatin at damaged chromosomes. In normal cells, mediates ubiquitination and degradation of isoform p19ARF/ARF of CDKN2A, a lysine-less tumor suppressor required for p53/TP53 activation under oncogenic stress. In cancer cells, however, isoform p19ARF/ARF and TRIP12 are located in different cell compartments, preventing isoform p19ARF/ARF ubiquitination and degradation. Does not mediate ubiquitination of isoform p16-INK4a of CDKN2A. Also catalyzes ubiquitination of NAE1 and SMARCE1, leading to their degradation. Ubiquitination and degradation of target proteins is regulated by interaction with proteins such as MYC, TRADD or SMARCC1, which disrupt the interaction between TRIP12 and target proteins. Mediates ubiquitination of ASXL1: following binding to N(6)-methyladenosine methylated DNA, ASXL1 is ubiquitinated by TRIP12, leading to its degradation and subsequent inactivation of the PR-DUB complex. This chain is E3 ubiquitin-protein ligase TRIP12 (TRIP12), found in Bos taurus (Bovine).